A 149-amino-acid chain; its full sequence is MRIIDNLEQFRQIYASGKKWQRCVEAIENIDNIQPGVAHSIGDSLTYRVETDSATDALFTGHRRYFEVHYYLQGQQKIEYAPKETLQVVEYYRDETDREYLKGCGETVEVHEGQIVICDIHEAYRFICNNAVKKVVLKVTIEDGYFHNK.

Heterooctamer of 4 alpha and 4 beta subunits.

Its function is as follows. Required for full activity of the EbgA enzyme. Exact function not known. The sequence is that of Evolved beta-galactosidase subunit beta (ebgC) from Escherichia coli O6:H1 (strain CFT073 / ATCC 700928 / UPEC).